The sequence spans 49 residues: Astexin-3 (49 aa).

The propeptide occupies 1-25 (MRTYNRSLPARAGLTDLGKVTTHTK). Positions 26-34 (GPTPMVGLD) form a cross-link, isoaspartyl glycine isopeptide (Gly-Asp).

Post-translationally, this lasso peptide is hydrolyzed to a linear form by the isopeptidase AtxE2, in vitro. The isopeptidase AtxE2 only recognizes the threaded form (but not the unthreaded form).

The protein resides in the cytoplasm. The protein localises to the secreted. Functionally, shows weak antimicrobial activity against its phylogenetic relative Caulobacter crescentus. Does not show activity against other bacteria tested (E.coli, Vibrio sp, Burkhoderia thailandensis, and Salmonella newport). The protein is Astexin-3 of Asticcacaulis excentricus (strain ATCC 15261 / DSM 4724 / KCTC 12464 / NCIMB 9791 / VKM B-1370 / CB 48).